We begin with the raw amino-acid sequence, 228 residues long: Cytochrome c oxidase subunit 2 (228 aa).

Over 1–26 (MATWNNLNLQNGASPLMEQIIFFHDH) the chain is Mitochondrial intermembrane. The helical transmembrane segment at 27 to 48 (TLIILIMITILVGYLMINLFFN) threads the bilayer. Residues 49 to 62 (KYINRFLLEGQMIE) are Mitochondrial matrix-facing. The chain crosses the membrane as a helical span at residues 63 to 82 (LIWTILPAITLIFIALPSLR). Topologically, residues 83-228 (LLYLLDELNN…FIKWINNYSS (146 aa)) are mitochondrial intermembrane. Cu cation is bound by residues His161, Cys196, Glu198, Cys200, His204, and Met207. Position 198 (Glu198) interacts with Mg(2+).

Belongs to the cytochrome c oxidase subunit 2 family. Component of the cytochrome c oxidase (complex IV, CIV), a multisubunit enzyme composed of a catalytic core of 3 subunits and several supernumerary subunits. The complex exists as a monomer or a dimer and forms supercomplexes (SCs) in the inner mitochondrial membrane with ubiquinol-cytochrome c oxidoreductase (cytochrome b-c1 complex, complex III, CIII). The cofactor is Cu cation.

Its subcellular location is the mitochondrion inner membrane. The catalysed reaction is 4 Fe(II)-[cytochrome c] + O2 + 8 H(+)(in) = 4 Fe(III)-[cytochrome c] + 2 H2O + 4 H(+)(out). Component of the cytochrome c oxidase, the last enzyme in the mitochondrial electron transport chain which drives oxidative phosphorylation. The respiratory chain contains 3 multisubunit complexes succinate dehydrogenase (complex II, CII), ubiquinol-cytochrome c oxidoreductase (cytochrome b-c1 complex, complex III, CIII) and cytochrome c oxidase (complex IV, CIV), that cooperate to transfer electrons derived from NADH and succinate to molecular oxygen, creating an electrochemical gradient over the inner membrane that drives transmembrane transport and the ATP synthase. Cytochrome c oxidase is the component of the respiratory chain that catalyzes the reduction of oxygen to water. Electrons originating from reduced cytochrome c in the intermembrane space (IMS) are transferred via the dinuclear copper A center (CU(A)) of subunit 2 and heme A of subunit 1 to the active site in subunit 1, a binuclear center (BNC) formed by heme A3 and copper B (CU(B)). The BNC reduces molecular oxygen to 2 water molecules using 4 electrons from cytochrome c in the IMS and 4 protons from the mitochondrial matrix. This chain is Cytochrome c oxidase subunit 2 (COII), found in Yponomeuta malinellus (European small ermine moth).